Reading from the N-terminus, the 122-residue chain is Large ribosomal subunit protein uL14 (122 aa).

It belongs to the universal ribosomal protein uL14 family. Part of the 50S ribosomal subunit. Forms a cluster with proteins L3 and L19. In the 70S ribosome, L14 and L19 interact and together make contacts with the 16S rRNA in bridges B5 and B8.

Binds to 23S rRNA. Forms part of two intersubunit bridges in the 70S ribosome. The polypeptide is Large ribosomal subunit protein uL14 (Vesicomyosocius okutanii subsp. Calyptogena okutanii (strain HA)).